The sequence spans 453 residues: tRNA modification GTPase MnmE (453 aa).

(6S)-5-formyl-5,6,7,8-tetrahydrofolate is bound by residues arginine 22, glutamate 79, and lysine 119. In terms of domain architecture, TrmE-type G spans 215 to 376 (GMKVVIAGRP…LKQHLKSLMG (162 aa)). K(+) is bound at residue asparagine 225. GTP-binding positions include 225–230 (NAGKSS), 244–250 (TEIAGTT), 269–272 (DTAG), and 334–337 (NKAD). Residue serine 229 participates in Mg(2+) binding. K(+) contacts are provided by threonine 244, isoleucine 246, and threonine 249. Position 250 (threonine 250) interacts with Mg(2+). Lysine 453 serves as a coordination point for (6S)-5-formyl-5,6,7,8-tetrahydrofolate.

It belongs to the TRAFAC class TrmE-Era-EngA-EngB-Septin-like GTPase superfamily. TrmE GTPase family. In terms of assembly, homodimer. Heterotetramer of two MnmE and two MnmG subunits. It depends on K(+) as a cofactor.

It is found in the cytoplasm. Functionally, exhibits a very high intrinsic GTPase hydrolysis rate. Involved in the addition of a carboxymethylaminomethyl (cmnm) group at the wobble position (U34) of certain tRNAs, forming tRNA-cmnm(5)s(2)U34. The sequence is that of tRNA modification GTPase MnmE from Shewanella baltica (strain OS185).